The following is a 117-amino-acid chain: Large ribosomal subunit protein bL20c (117 aa).

This sequence belongs to the bacterial ribosomal protein bL20 family.

Its subcellular location is the plastid. It localises to the chloroplast. Its function is as follows. Binds directly to 23S ribosomal RNA and is necessary for the in vitro assembly process of the 50S ribosomal subunit. It is not involved in the protein synthesizing functions of that subunit. This is Large ribosomal subunit protein bL20c from Populus trichocarpa (Western balsam poplar).